The primary structure comprises 412 residues: Probable histone-binding protein rba-1 (412 aa).

6 WD repeats span residues 117–157 (NHPG…SEPK), 169–209 (GHEG…TISG), 219–259 (GHSS…PQLT), 262–302 (GHTA…KKMY), 306–346 (HHND…DPSS), and 365–405 (GHTG…VSSE).

It belongs to the WD repeat RBAP46/RBAP48/MSI1 family. Binds directly to helix 1 of the histone fold of histone H4, a region that is not accessible when H4 is in chromatin. Interacts with zft-11; the interaction is required to suppress the activation of non-neuronal genes in neurons.

Its subcellular location is the nucleus. Core histone-binding subunit that may target chromatin assembly factors, chromatin remodeling factors and histone deacetylases to their histone substrates in a manner that is regulated by nucleosomal DNA. Plays a role in regulating cell cycle progression. Required to repress the induction of vulval development by Ras signaling. In association with the zinc finger protein ztf-11, negatively regulates the expression of non-neuronal genes during neurogenesis. In Caenorhabditis elegans, this protein is Probable histone-binding protein rba-1.